Here is a 761-residue protein sequence, read N- to C-terminus: Cytoplasmic export protein 1 (761 aa).

HEAT repeat units lie at residues 385-423 and 498-534; these read IYPHFIQGLTDSDATLRLQTLKTIPCIVSCLTERQLNNE and NTIANKILTVIAPGLLDKSPIVRGRAKILFEEYLEKL. Disordered regions lie at residues 660 to 692 and 714 to 761; these read DDGWIQDESGPSKVPQKHTRPQNSTLAKSIAPS and STVT…DTNW. Polar residues-rich tracts occupy residues 680 to 692 and 714 to 737; these read PQNSTLAKSIAPS and STVTTKSSLSNKTARSKPISSIRG. A compositionally biased stretch (acidic residues) spans 747 to 761; that stretch reads GWDDDGDSDSWDTNW. Residue Ser-754 is modified to Phosphoserine.

In terms of assembly, associates with the nuclear pore complex (NPC). Interacts with GSP1, LOS1, MSN5, NUP116 and TEF2.

The protein resides in the cytoplasm. In terms of biological role, component of the nuclear tRNA export machinery that my collect tRNA from the nuclear tRNA export receptors of the aminoacylation-dependent export and may deliver aminoacylated tRNAs to the translation machinery pathway at the nuclear pore complex. The polypeptide is Cytoplasmic export protein 1 (CEX1) (Saccharomyces cerevisiae (strain ATCC 204508 / S288c) (Baker's yeast)).